A 232-amino-acid chain; its full sequence is Phosphatidylserine decarboxylase proenzyme (232 aa).

The active-site Schiff-base intermediate with substrate; via pyruvic acid is the S190. Position 190 is a pyruvic acid (Ser); by autocatalysis (S190).

This sequence belongs to the phosphatidylserine decarboxylase family. PSD-A subfamily. As to quaternary structure, heterodimer of a large membrane-associated beta subunit and a small pyruvoyl-containing alpha subunit. Pyruvate serves as cofactor. Is synthesized initially as an inactive proenzyme. Formation of the active enzyme involves a self-maturation process in which the active site pyruvoyl group is generated from an internal serine residue via an autocatalytic post-translational modification. Two non-identical subunits are generated from the proenzyme in this reaction, and the pyruvate is formed at the N-terminus of the alpha chain, which is derived from the carboxyl end of the proenzyme. The post-translation cleavage follows an unusual pathway, termed non-hydrolytic serinolysis, in which the side chain hydroxyl group of the serine supplies its oxygen atom to form the C-terminus of the beta chain, while the remainder of the serine residue undergoes an oxidative deamination to produce ammonia and the pyruvoyl prosthetic group on the alpha chain.

The protein resides in the cell membrane. It catalyses the reaction a 1,2-diacyl-sn-glycero-3-phospho-L-serine + H(+) = a 1,2-diacyl-sn-glycero-3-phosphoethanolamine + CO2. The protein operates within phospholipid metabolism; phosphatidylethanolamine biosynthesis; phosphatidylethanolamine from CDP-diacylglycerol: step 2/2. Its function is as follows. Catalyzes the formation of phosphatidylethanolamine (PtdEtn) from phosphatidylserine (PtdSer). The polypeptide is Phosphatidylserine decarboxylase proenzyme (Bradyrhizobium diazoefficiens (strain JCM 10833 / BCRC 13528 / IAM 13628 / NBRC 14792 / USDA 110)).